Consider the following 453-residue polypeptide: Zinc finger and BTB domain-containing protein 44 (453 aa).

Lys-4 participates in a covalent cross-link: Glycyl lysine isopeptide (Lys-Gly) (interchain with G-Cter in SUMO2). One can recognise a BTB domain in the interval 31 to 98; sequence CDITIRVQDK…AYTATLSINT (68 aa). The residue at position 135 (Ser-135) is a Phosphoserine. Positions 135–157 are disordered; that stretch reads SQPEKSLDAGQENSSNCNFTSRD. Residues 145 to 157 are compositionally biased toward polar residues; that stretch reads QENSSNCNFTSRD. Residues Ser-159, Ser-161, Ser-165, Ser-191, Ser-194, and Ser-199 each carry the phosphoserine modification. Thr-200 carries the post-translational modification Phosphothreonine. The tract at residues 241–266 is disordered; sequence QPEKAKQAENTRTLELPGPSEAGRRV. Lys-290 is covalently cross-linked (Glycyl lysine isopeptide (Lys-Gly) (interchain with G-Cter in SUMO2)). 2 disordered regions span residues 295-324 and 336-366; these read SDEE…PGSE and SSSI…ADDD. Low complexity predominate over residues 304–318; the sequence is SQPVSASQSSLSDQQ. Polar residues predominate over residues 352–361; the sequence is TLQSTSSTNA. 2 C2H2-type zinc fingers span residues 399–421 and 427–449; these read FQCP…MLIH and FQCD…RLKH.

The protein resides in the nucleus. This is Zinc finger and BTB domain-containing protein 44 (Zbtb44) from Mus musculus (Mouse).